Reading from the N-terminus, the 71-residue chain is MAPPTKILGLDTQQRMLQRGENCSLKSLVQNECAFNGNDYVCTPFKRLFEQCMVKDGRVLNIEVTNLNTNR.

Its subcellular location is the mitochondrion inner membrane. Its function is as follows. Required for mitochondrial inner membrane peptidase function. This Kluyveromyces lactis (strain ATCC 8585 / CBS 2359 / DSM 70799 / NBRC 1267 / NRRL Y-1140 / WM37) (Yeast) protein is Protein SOM1, mitochondrial (SOM1).